The chain runs to 1658 residues: MLSVLWVLISWINISGPIPNISGSLTLFGLYYGFLAALPIGLSQILTIRAFLLGGNTGGTLAVSGSIMGQLITNLSIYYWPIYVMLLKPHAITLLVLPYMLFYWYRTKDLLYDQPPNPVESLNDAQVRQIFLDSFILSLLNPVILPSPVFARSLNLFIFRYSNKISFVISSSFGWLGGYILFINLIKLLMVRIERDSSVNYPLIKSIINQIFSIIILALRLLYLGRAPVPLFTKKIHDGFESDENQIVKSLWLNKPWPTVLFDYRKWNRPFRYIQNGPNGDSPVKKQVSQYFFDTCSSDGRQRISFTSLPSSSTFQKDLKEYLNISEISPSSEDIYDKWIHIEEKRKNNSNDGLTNRVQALDNRFLMINVTEYRNELCDHKENVSIKTYDPFLNKGFRGKIAISESPWIFDEKPLESTRRQIMLNISKRNNKLKDWIYICWQGLERKKLSLPWEPLTPDAFNSFNLIAKEVSNDEEPRTDLKQVDFYEEQTLVTLDEQNISSELFATVTEHTNDLHERTTTKSSINWEHVLNLSSKKRDYYSRYLENIKWHKLLNYWKKLFLDSSTKVRDTLFLITQAFGIRNEYQVQDVVKEMPRWTSKLANYKFDVIGITFSDVRYRKLKNFDYVFETVDQEIEIETNEPFRIVKRFSQQSDFRRNLVIGSMRARRRKTLIWNSLQLKTHSPFFLRIMDETTPLKIPLKVSNKIDTKSTFTPFTKIKQGLIPFFSDSDDEKVFAAEKTELDRLTIANKWDFASAHWGRGFPLVIQSYLRKYVVIPVLIISKNISRILLFQVPEWKEDWNEWSKEIHVKCNYDGTEVSVHQLPSLWHREGLQIKILYPFHLKPWHNSKLRQLEFLDNLDIKNFGDGDEIEKTLLYDGIKDSYTSAERKKIDYSYLTIWGNQTDSPFGNTKKQPFFWKPVIKELRKKRKRILSKITQNFKIYYKFFPLGQKSNIYNESDVPAVSKTRADKSKNNDIFEFEPDDKDKNEERDFKINNEIFDELPIGITPKSSNNLSLQNSNKIEYGTGVFTRESGNDVTPNSNEIERITKHFFDEVQTNTDSKVISDEYPNDGKKLKLRKILIKFYQQIIRLRRKSTQLIHERINSINIFSEEINRNVLKNIFYLIRFKIKLMINFVKNIFINCNEVIHSYNNIFRLQTKYDKYVNQDLIVSGKEGQDPEFNSDQGIDSVSQADVFHGVRQSKTINKSYLKNFLKYWNLYYFIGENYEKKLKVILDEKGILGVGEPQNLSEENWKDWLRCLHRCKLPSHIWCKIVPRTWKNEVTKHWKMEENFPNHFDEDIPHTFMTYSSWERIGKLNRRHKYNLLSYSYLDFAKNREIKKFPMWQSEGEQTIFNNRIREIRECQSVNNEENDKSKIYFEFKMKLWLFPELMKAKKVFGSEVILIPEISLIAEKHNKSLKDERLLEDRECHESIYQWRRTSKELERIVKKLRDIAFLTIIIENQDKFVSLPANIVENLEALVFSTRGDSVKETFQNLEFRLPRVLDDQILMYKTISTLLKFKNRFKRRLDLNTFDESIPRIEIVKNGGKTISSSYFNLEDILLPKRRMELRILNSPDLKGDENRDAELDRGTFGIKRQSYEQLIEEDRDSANKNQIIKRFLRPSYRLEDPACMNRFWFHTNNGSRFAMLRICMYPSIHD.

6 helical membrane-spanning segments follow: residues 28 to 48 (FGLY…ILTI), 52 to 72 (LLGG…GQLI), 82 to 102 (IYVM…YMLF), 130 to 150 (IFLD…SPVF), 165 to 185 (ISFV…FINL), and 199 to 219 (VNYP…ILAL).

It belongs to the TIC214 family. In terms of assembly, part of the Tic complex.

It is found in the plastid. It localises to the chloroplast inner membrane. In terms of biological role, involved in protein precursor import into chloroplasts. May be part of an intermediate translocation complex acting as a protein-conducting channel at the inner envelope. The protein is Protein TIC 214 of Huperzia lucidula (Shining clubmoss).